We begin with the raw amino-acid sequence, 256 residues long: RNA polymerase sigma factor SigI1 (256 aa).

The Polymerase core binding signature appears at 67–80 (DEFSIALSAFNEAI). The H-T-H motif DNA-binding region spans 205–224 (RNELKKKAKVHGRTIGNNRK).

It belongs to the sigma-70 factor family. SigI subfamily. As to quaternary structure, interacts with RsgI1.

The protein resides in the cytoplasm. Negatively regulated by the anti-sigma-I factor RsgI1. Binding of the polysaccharide substrate to RsgI1 may lead to the release and activation of SigI1. Functionally, sigma factors are initiation factors that promote the attachment of RNA polymerase to specific initiation sites and are then released. This sigma factor is involved in regulation of cellulosomal genes via an external polysaccharide-sensing mechanism. SigI1 promotes transcription from sigI1 and celS promoters. The chain is RNA polymerase sigma factor SigI1 from Acetivibrio thermocellus (strain ATCC 27405 / DSM 1237 / JCM 9322 / NBRC 103400 / NCIMB 10682 / NRRL B-4536 / VPI 7372) (Clostridium thermocellum).